A 322-amino-acid polypeptide reads, in one-letter code: DNA repair and recombination protein RadA (322 aa).

105–112 (GMFGSGKT) serves as a coordination point for ATP.

This sequence belongs to the eukaryotic RecA-like protein family.

Functionally, involved in DNA repair and in homologous recombination. Binds and assemble on single-stranded DNA to form a nucleoprotein filament. Hydrolyzes ATP in a ssDNA-dependent manner and promotes DNA strand exchange between homologous DNA molecules. The chain is DNA repair and recombination protein RadA from Methanococcus maripaludis (strain DSM 14266 / JCM 13030 / NBRC 101832 / S2 / LL).